Reading from the N-terminus, the 240-residue chain is Uridylate kinase (240 aa).

Position 9–12 (9–12 (KLSG)) interacts with ATP. Residue Gly-51 participates in UMP binding. Residues Gly-52 and Arg-56 each coordinate ATP. Residues Asp-71 and 132–139 (TGNPFFTT) each bind UMP. ATP contacts are provided by Thr-159, Tyr-165, and Asp-168.

This sequence belongs to the UMP kinase family. As to quaternary structure, homohexamer.

It localises to the cytoplasm. It carries out the reaction UMP + ATP = UDP + ADP. Its pathway is pyrimidine metabolism; CTP biosynthesis via de novo pathway; UDP from UMP (UMPK route): step 1/1. With respect to regulation, inhibited by UTP. Functionally, catalyzes the reversible phosphorylation of UMP to UDP. The chain is Uridylate kinase from Synechococcus elongatus (strain ATCC 33912 / PCC 7942 / FACHB-805) (Anacystis nidulans R2).